The primary structure comprises 608 residues: DNA mismatch repair protein MutL (608 aa).

This sequence belongs to the DNA mismatch repair MutL/HexB family.

This protein is involved in the repair of mismatches in DNA. It is required for dam-dependent methyl-directed DNA mismatch repair. May act as a 'molecular matchmaker', a protein that promotes the formation of a stable complex between two or more DNA-binding proteins in an ATP-dependent manner without itself being part of a final effector complex. In Elusimicrobium minutum (strain Pei191), this protein is DNA mismatch repair protein MutL.